Reading from the N-terminus, the 368-residue chain is Metacaspase-6 (368 aa).

Catalysis depends on residues His-86 and Cys-139. Cys-139 bears the S-nitrosocysteine mark. Residues 153-174 are disordered; it reads GESTKKKKDSGDSSTINKETEA.

Belongs to the peptidase C14B family. Post-translationally, proteolytically processed; by an autocatalytic mechanism. In terms of tissue distribution, expressed in roots and flower buds.

The sequence is that of Metacaspase-6 (AMC6) from Arabidopsis thaliana (Mouse-ear cress).